Here is a 522-residue protein sequence, read N- to C-terminus: 2-isopropylmalate synthase (522 aa).

The region spanning 5–267 is the Pyruvate carboxyltransferase domain; the sequence is VIIFDTTLRD…ETGINAKEIH (263 aa). Positions 14, 202, 204, and 238 each coordinate Mn(2+). The interval 392–522 is regulatory domain; sequence QLQQLVVQSD…MQKNRELGGV (131 aa).

The protein belongs to the alpha-IPM synthase/homocitrate synthase family. LeuA type 1 subfamily. Homodimer. Mn(2+) serves as cofactor.

It is found in the cytoplasm. It catalyses the reaction 3-methyl-2-oxobutanoate + acetyl-CoA + H2O = (2S)-2-isopropylmalate + CoA + H(+). The protein operates within amino-acid biosynthesis; L-leucine biosynthesis; L-leucine from 3-methyl-2-oxobutanoate: step 1/4. Functionally, catalyzes the condensation of the acetyl group of acetyl-CoA with 3-methyl-2-oxobutanoate (2-ketoisovalerate) to form 3-carboxy-3-hydroxy-4-methylpentanoate (2-isopropylmalate). This Shewanella baltica (strain OS155 / ATCC BAA-1091) protein is 2-isopropylmalate synthase.